The following is a 105-amino-acid chain: Urease subunit beta (105 aa).

It belongs to the urease beta subunit family. As to quaternary structure, heterotrimer of UreA (gamma), UreB (beta) and UreC (alpha) subunits. Three heterotrimers associate to form the active enzyme.

It localises to the cytoplasm. It carries out the reaction urea + 2 H2O + H(+) = hydrogencarbonate + 2 NH4(+). Its pathway is nitrogen metabolism; urea degradation; CO(2) and NH(3) from urea (urease route): step 1/1. In Pseudomonas putida (strain GB-1), this protein is Urease subunit beta.